The sequence spans 382 residues: MSAWVLPDHIADVLPSEARHIEELRRGLLDTARCYGYELVMPPLMEHLESLLTGTGEALDLQTFKLVDQLSGRSLGLRADTTPQVARIDAHLLNRKGVTRLCYCGPVLHTRPDRPHATREPLQFGAEIYGHSGLEADLEALQLARECLRVAGVRDTTIDLADMRIVRKLLAGVALSPQRLSRIHAALAAKDAGELAALTHCFAADSRAALLALLQLYGDEAVLAEAEKALQRIDGISPVLANLRWLASRLEGAQVTFDLADLRGYAYYSGARFAIYARGASDALVRGGRYDEVGAVFGRNRPAVGLSLDIKQVVGVVPPQTLKAAIRAPWGEAADVNAAIAELRAAGETVVCVLPGHESEVDEFHCDRELAQVSGRWVVQAV.

Belongs to the class-II aminoacyl-tRNA synthetase family. HisZ subfamily. In terms of assembly, heteromultimer composed of HisG and HisZ subunits.

It localises to the cytoplasm. It functions in the pathway amino-acid biosynthesis; L-histidine biosynthesis; L-histidine from 5-phospho-alpha-D-ribose 1-diphosphate: step 1/9. Functionally, required for the first step of histidine biosynthesis. May allow the feedback regulation of ATP phosphoribosyltransferase activity by histidine. This chain is ATP phosphoribosyltransferase regulatory subunit, found in Verminephrobacter eiseniae (strain EF01-2).